A 251-amino-acid polypeptide reads, in one-letter code: Ubiquinone/menaquinone biosynthesis C-methyltransferase UbiE (251 aa).

S-adenosyl-L-methionine contacts are provided by residues Thr-74, Asp-95, and 123–124 (NA).

Belongs to the class I-like SAM-binding methyltransferase superfamily. MenG/UbiE family.

It catalyses the reaction a 2-demethylmenaquinol + S-adenosyl-L-methionine = a menaquinol + S-adenosyl-L-homocysteine + H(+). It carries out the reaction a 2-methoxy-6-(all-trans-polyprenyl)benzene-1,4-diol + S-adenosyl-L-methionine = a 5-methoxy-2-methyl-3-(all-trans-polyprenyl)benzene-1,4-diol + S-adenosyl-L-homocysteine + H(+). It functions in the pathway quinol/quinone metabolism; menaquinone biosynthesis; menaquinol from 1,4-dihydroxy-2-naphthoate: step 2/2. Its pathway is cofactor biosynthesis; ubiquinone biosynthesis. Functionally, methyltransferase required for the conversion of demethylmenaquinol (DMKH2) to menaquinol (MKH2) and the conversion of 2-polyprenyl-6-methoxy-1,4-benzoquinol (DDMQH2) to 2-polyprenyl-3-methyl-6-methoxy-1,4-benzoquinol (DMQH2). The protein is Ubiquinone/menaquinone biosynthesis C-methyltransferase UbiE of Shewanella sediminis (strain HAW-EB3).